We begin with the raw amino-acid sequence, 132 residues long: Phosphomevalonate dehydratase small subunit (132 aa).

The Proton acceptor role is filled by Ser-61.

The protein belongs to the AcnX type II small subunit family. As to quaternary structure, heterodimer composed of a large subunit (PMDh-L) and a small subunit (PMDh-S).

It catalyses the reaction (R)-5-phosphomevalonate = (2E)-3-methyl-5-phosphooxypent-2-enoate + H2O. The protein operates within isoprenoid biosynthesis; isopentenyl diphosphate biosynthesis via mevalonate pathway. Functionally, component of a hydro-lyase that catalyzes the dehydration of mevalonate 5-phosphate (MVA5P) to form trans-anhydromevalonate 5-phosphate (tAHMP). Involved in the archaeal mevalonate (MVA) pathway, which provides fundamental precursors for isoprenoid biosynthesis, such as isopentenyl diphosphate (IPP) and dimethylallyl diphosphate (DMAPP). The chain is Phosphomevalonate dehydratase small subunit from Archaeoglobus fulgidus (strain ATCC 49558 / DSM 4304 / JCM 9628 / NBRC 100126 / VC-16).